We begin with the raw amino-acid sequence, 259 residues long: Phosphate import ATP-binding protein PstB (259 aa).

The ABC transporter domain maps to 11 to 254 (AESKNLNFYY…PDNPRTEDYI (244 aa)). Position 43-50 (43-50 (GPSGCGKS)) interacts with ATP.

Belongs to the ABC transporter superfamily. Phosphate importer (TC 3.A.1.7) family. The complex is composed of two ATP-binding proteins (PstB), two transmembrane proteins (PstC and PstA) and a solute-binding protein (PstS).

The protein resides in the cell inner membrane. It catalyses the reaction phosphate(out) + ATP + H2O = ADP + 2 phosphate(in) + H(+). Functionally, part of the ABC transporter complex PstSACB involved in phosphate import. Responsible for energy coupling to the transport system. The sequence is that of Phosphate import ATP-binding protein PstB from Geobacter sulfurreducens (strain ATCC 51573 / DSM 12127 / PCA).